The chain runs to 478 residues: Cytochrome P450 monooxygenase asqL (478 aa).

Heme is bound at residue cysteine 407.

Belongs to the cytochrome P450 family. Heme is required as a cofactor.

The protein operates within secondary metabolite biosynthesis. It functions in the pathway alkaloid biosynthesis. It participates in mycotoxin biosynthesis. Cytochrome P450 monooxygenase; part of the gene cluster that mediates the biosynthesis of the aspoquinolone mycotoxins. The role of asqL within the aspoquinolone pathway has still to be determined. The first step of the pathway is catalyzed by the nonribosomal peptide synthetase asqK that condenses anthranilic acid and O-methyl-L-tyrosine to produce 4'-methoxycyclopeptin. 4'-methoxycyclopeptin is then converted to 4'-methoxydehydrocyclopeptin by the ketoglutarate-dependent dioxygenase asqJ. AsqJ also converts its first product 4'-methoxydehydrocyclopeptin to 4'-methoxycyclopenin. The following conversion of 4'-methoxycyclopenin into 4'-methoxyviridicatin is catalyzed by the cyclopenase asqI. 4'-methoxyviridicatin is the precursor of quinolone natural products, and is further converted to quinolinone B. The prenyltransferase asqH1 then catalyzes the canonical Friedel-Crafts alkylation of quinolinone B with dimethylallyl cation to yield dimethylallyl quinolone, which is subjected to FAD-dependent dehydrogenation by the FAD-linked oxidoreductase asqF to yield conjugated aryl diene. The delta(3') double bond then serves as the site of the second alkylation with DMAPP catalyzed by the prenyltransferase asqH2 to yield a carbenium ion intermediate, which can be attacked by H(2)O to yield a styrenyl quinolone containing a C3'-hydroxyprenyl chain. The FAD-dependent monooxygenase asqG performs epoxidation of the terminal C7'-C8' olefin. Finally, after dehydratation of the epoxide at C3 by asqC, the quinolone epoxide rearrangement protein asqO catalyzes an enzymatic 3-exo-tet cyclization to yield the cyclopropyl-THF ring system in aspoquinolone. The chain is Cytochrome P450 monooxygenase asqL from Emericella nidulans (strain FGSC A4 / ATCC 38163 / CBS 112.46 / NRRL 194 / M139) (Aspergillus nidulans).